A 399-amino-acid polypeptide reads, in one-letter code: MASSTATMLKASPVKSDWVKGQSLLLRQPSSVSAIRSHVAPSALTVRAASAYADELVKTAKTIASPGHGIMAMDESNATCGKRLASIGLENTEANRQAYRTLLVSAPGLGQYISGAILFEETLYQSTTDGKKMVDVLVEQNIVPGIKVDKGLVPLVGSYDESWCQGLDGLASRTAAYYQQGARFAKWRTVVSIPNGPSALAVKEAAWGLARYAAISQDSGLVPIVEPEIMLDGEHGIDRTYDVAEKVWAEVFFYLAQNNVMFEGILLKPSMVTPGAEATDRATPEQVASYTLKLLRNRIPPAVPGIMFLSGGQSELEATLNLNAMNQAPNPWHVSFSYARALQNTCLKTWGGKEENVKAAQDILLARAKANSLAQLGKYTGEGESEEAKEGMFVKGYTY.

Residues 1 to 48 (MASSTATMLKASPVKSDWVKGQSLLLRQPSSVSAIRSHVAPSALTVRA) constitute a chloroplast transit peptide. A substrate-binding site is contributed by arginine 96. At serine 158 the chain carries Phosphoserine. Lysine 186 is a substrate binding site. Serine 216 carries the phosphoserine modification. Catalysis depends on glutamate 226, which acts as the Proton acceptor. The Schiff-base intermediate with dihydroxyacetone-P role is filled by lysine 268. A substrate-binding site is contributed by 310-312 (SGG). Lysine 395 carries the post-translational modification N6,N6,N6-trimethyllysine.

This sequence belongs to the class I fructose-bisphosphate aldolase family. In terms of assembly, homotetramer. Can be trimethylated at Lys-395 by LSMT-L, but the trimethylation has no effect in vitro on the kinetic properties of the enzyme. In terms of processing, S-glutathionylated. In terms of tissue distribution, highly expressed in rosettes leaves and cauline leaves.

It is found in the plastid. It localises to the chloroplast. The protein localises to the plastoglobule. Its subcellular location is the chloroplast stroma. The catalysed reaction is beta-D-fructose 1,6-bisphosphate = D-glyceraldehyde 3-phosphate + dihydroxyacetone phosphate. Its pathway is carbohydrate degradation; glycolysis; D-glyceraldehyde 3-phosphate and glycerone phosphate from D-glucose: step 4/4. Plays a key role in glycolysis and gluconeogenesis. This Arabidopsis thaliana (Mouse-ear cress) protein is Fructose-bisphosphate aldolase 1, chloroplastic.